A 397-amino-acid chain; its full sequence is DNA replication and repair protein RecF (397 aa).

30–37 (GPNGQGKT) provides a ligand contact to ATP.

Belongs to the RecF family.

The protein resides in the cytoplasm. Its function is as follows. The RecF protein is involved in DNA metabolism; it is required for DNA replication and normal SOS inducibility. RecF binds preferentially to single-stranded, linear DNA. It also seems to bind ATP. The protein is DNA replication and repair protein RecF of Beutenbergia cavernae (strain ATCC BAA-8 / DSM 12333 / CCUG 43141 / JCM 11478 / NBRC 16432 / NCIMB 13614 / HKI 0122).